Here is a 519-residue protein sequence, read N- to C-terminus: Anthranilate synthase component 1 (519 aa).

L-tryptophan is bound by residues Ser39 and 290 to 292; that span reads PYM. Chorismate is bound at residue 327–328; the sequence is GT. Residue Glu360 participates in Mg(2+) binding. Chorismate contacts are provided by residues Tyr448, Arg468, 482–484, and Gly484; that span reads GAG. Position 497 (Glu497) interacts with Mg(2+).

Belongs to the anthranilate synthase component I family. As to quaternary structure, heterotetramer consisting of two non-identical subunits: a beta subunit (TrpG) and a large alpha subunit (TrpE). It depends on Mg(2+) as a cofactor.

It carries out the reaction chorismate + L-glutamine = anthranilate + pyruvate + L-glutamate + H(+). The protein operates within amino-acid biosynthesis; L-tryptophan biosynthesis; L-tryptophan from chorismate: step 1/5. Its activity is regulated as follows. Feedback inhibited by tryptophan. In terms of biological role, part of a heterotetrameric complex that catalyzes the two-step biosynthesis of anthranilate, an intermediate in the biosynthesis of L-tryptophan. In the first step, the glutamine-binding beta subunit (TrpG) of anthranilate synthase (AS) provides the glutamine amidotransferase activity which generates ammonia as a substrate that, along with chorismate, is used in the second step, catalyzed by the large alpha subunit of AS (TrpE) to produce anthranilate. In the absence of TrpG, TrpE can synthesize anthranilate directly from chorismate and high concentrations of ammonia. This chain is Anthranilate synthase component 1 (trpE), found in Serratia marcescens.